A 101-amino-acid chain; its full sequence is Small ribosomal subunit protein bS18c (101 aa).

Over residues 1-19 the composition is skewed to basic residues; sequence MDKSKQLFRKSKRSFRRRL. A disordered region spans residues 1 to 23; that stretch reads MDKSKQLFRKSKRSFRRRLPPIG.

It belongs to the bacterial ribosomal protein bS18 family. In terms of assembly, part of the 30S ribosomal subunit.

It localises to the plastid. It is found in the chloroplast. The chain is Small ribosomal subunit protein bS18c from Acorus calamus (Sweet flag).